Here is a 436-residue protein sequence, read N- to C-terminus: F-box protein SKIP16 (436 aa).

Residues 75 to 111 (RESFRMYPWNLVKRVRLCWDNLKQWLTLNFPEAKATL) form the F-box; degenerate domain. The 142-residue stretch at 295–436 (VSVTNGVQVR…FPLELPDYIF (142 aa)) folds into the ApaG domain.

In terms of assembly, part of a SCF (ASK-cullin-F-box) protein ligase complex. Interacts with SKP1A/ASK1, SKP1B/ASK2, ASK4, ASK11 and ASK13.

The protein operates within protein modification; protein ubiquitination. Functionally, component of SCF(ASK-cullin-F-box) E3 ubiquitin ligase complexes, which may mediate the ubiquitination and subsequent proteasomal degradation of target proteins. This chain is F-box protein SKIP16 (SKIP16), found in Arabidopsis thaliana (Mouse-ear cress).